We begin with the raw amino-acid sequence, 253 residues long: MGGRKWQSIKRQKARVDAQKGKTTTQLSRAIIVAARQGIPDPAGNFQLRTAIEKARAAGVPNDSIDRAIAKGAGTYEDGESNYEEMRYEGYGPGGVAVLIEALTDNRNRTAADLRAAFSKKGGNLGETGCVSWMFSQKGVIRLVGELEEEKLLEALLEGEGESYEWLDEEDGGGVEVFSAVNQLENLNQVLQNHGFTIAETELRWLPENTIEIAEPDQAKALMQMIDTLESLDDVQSVTSNFELTEELLALAG.

The segment at 1-22 is disordered; that stretch reads MGGRKWQSIKRQKARVDAQKGK.

The protein belongs to the TACO1 family.

The protein resides in the cytoplasm. This is Probable transcriptional regulatory protein slr0989 from Synechocystis sp. (strain ATCC 27184 / PCC 6803 / Kazusa).